The sequence spans 300 residues: (R)-3-hydroxydecanoyl-ACP:CoA transacylase (300 aa).

Positions 29-253 (TIILVNGSLS…HTIRNAGHFI (225 aa)) constitute an AB hydrolase-1 domain.

Its pathway is polyester biosynthesis; polyhydroxyalkanoate biosynthesis. Its function is as follows. Catalyzes the transfer of the acyl moiety from in vitro synthesized 3-hydroxydecanoyl-CoA to acyl carrier protein. In Pseudomonas aeruginosa (strain ATCC 15692 / DSM 22644 / CIP 104116 / JCM 14847 / LMG 12228 / 1C / PRS 101 / PAO1), this protein is (R)-3-hydroxydecanoyl-ACP:CoA transacylase (phaG).